A 465-amino-acid chain; its full sequence is Iron transporter FTH1 (465 aa).

Over 1–11 (MAFEDYFSFQI) the chain is Vacuolar. Residues 12–32 (FFIFLRESLEIVVIVSILLTI) traverse the membrane as a helical segment. The Cytoplasmic portion of the chain corresponds to 33–135 (VKQGLSVEDD…LYQKLKIQIL (103 aa)). The disordered stretch occupies residues 44–66 (PFEGSSSSAGLPSPNTNTNADST). Over residues 46 to 66 (EGSSSSAGLPSPNTNTNADST) the composition is skewed to polar residues. The chain crosses the membrane as a helical span at residues 136–156 (AGGAFGLLLCMLIGGAFVSIF). Residues 157 to 170 (YHIGTDLWTLSEHY) lie on the Vacuolar side of the membrane. Residues 171–191 (YEGVLSLVASVIISVMGLFFL) form a helical membrane-spanning segment. Over 192–289 (RMGKLREKFR…FFFRYSSSLS (98 aa)) the chain is Cytoplasmic. The chain crosses the membrane as a helical span at residues 290-310 (LKICLVVATCFLYLIAAGLFS). Residues 311–358 (KGVWQLELQDYVNKCNGQDMSEVGNGPGSYDISRSVWHVNCCNGEKDG) lie on the Vacuolar side of the membrane. A helical membrane pass occupies residues 359–379 (GWMIFTAIFGWTNSATVGSVI). The Cytoplasmic segment spans residues 380-465 (SYNAYWLVLI…LIIDSSGSAN (86 aa)). Residues 433 to 465 (TSELNSSTSEPDSQRRSKDSSVPLIIDSSGSAN) form a disordered region. Residues Ser-449 and Ser-453 each carry the phosphoserine modification.

The protein belongs to the oxidase-dependent Fe transporter (OFeT) (TC 9.A.10.1) family. In terms of assembly, interacts with FET5.

Its subcellular location is the vacuole membrane. High affinity iron transporter probably involved in transport of intravacuolar stores of iron. The protein is Iron transporter FTH1 (FTH1) of Saccharomyces cerevisiae (strain ATCC 204508 / S288c) (Baker's yeast).